Consider the following 372-residue polypeptide: N-methyl-L-tryptophan oxidase (372 aa).

Residue 4 to 34 participates in FAD binding; sequence DLIIIGSGSVGAAAGYYATRAGLNVLMTDAH. The residue at position 308 (Cys-308) is an S-8alpha-FAD cysteine.

This sequence belongs to the MSOX/MTOX family. MTOX subfamily. Monomer. FAD serves as cofactor.

It catalyses the reaction N(alpha)-methyl-L-tryptophan + O2 + H2O = L-tryptophan + formaldehyde + H2O2. Functionally, catalyzes the oxidative demethylation of N-methyl-L-tryptophan. This is N-methyl-L-tryptophan oxidase from Escherichia coli (strain SMS-3-5 / SECEC).